The sequence spans 266 residues: 3-methyl-2-oxobutanoate hydroxymethyltransferase (266 aa).

2 residues coordinate Mg(2+): Asp-43 and Asp-82. Residues Asp-43–Ser-44, Asp-82, and Lys-110 each bind 3-methyl-2-oxobutanoate. Glu-112 provides a ligand contact to Mg(2+). The Proton acceptor role is filled by Glu-179.

This sequence belongs to the PanB family. In terms of assembly, homodecamer; pentamer of dimers. Mg(2+) is required as a cofactor.

It localises to the cytoplasm. The enzyme catalyses 3-methyl-2-oxobutanoate + (6R)-5,10-methylene-5,6,7,8-tetrahydrofolate + H2O = 2-dehydropantoate + (6S)-5,6,7,8-tetrahydrofolate. The protein operates within cofactor biosynthesis; (R)-pantothenate biosynthesis; (R)-pantoate from 3-methyl-2-oxobutanoate: step 1/2. Catalyzes the reversible reaction in which hydroxymethyl group from 5,10-methylenetetrahydrofolate is transferred onto alpha-ketoisovalerate to form ketopantoate. This chain is 3-methyl-2-oxobutanoate hydroxymethyltransferase, found in Psychrobacter arcticus (strain DSM 17307 / VKM B-2377 / 273-4).